Reading from the N-terminus, the 101-residue chain is A-type ATP synthase subunit F (101 aa).

Belongs to the V-ATPase F subunit family. Has multiple subunits with at least A(3), B(3), C, D, E, F, H, I and proteolipid K(x).

Its subcellular location is the cell membrane. Component of the A-type ATP synthase that produces ATP from ADP in the presence of a proton gradient across the membrane. This chain is A-type ATP synthase subunit F, found in Archaeoglobus fulgidus (strain ATCC 49558 / DSM 4304 / JCM 9628 / NBRC 100126 / VC-16).